The primary structure comprises 458 residues: Bifunctional protein GlmU (458 aa).

The segment at 1–230 (MENRYAIILA…FDEAMGVNDR (230 aa)) is pyrophosphorylase. UDP-N-acetyl-alpha-D-glucosamine contacts are provided by residues 9-12 (LAAG), Lys23, Gln73, and 78-79 (GT). Asp103 contributes to the Mg(2+) binding site. 4 residues coordinate UDP-N-acetyl-alpha-D-glucosamine: Gly140, Glu155, Asn170, and Asn228. Asn228 lines the Mg(2+) pocket. The linker stretch occupies residues 231–251 (VALSTANKIMHRRLNEMHMRN). The tract at residues 252–458 (GVTFIDPDTT…YAKKLPYMKD (207 aa)) is N-acetyltransferase. The UDP-N-acetyl-alpha-D-glucosamine site is built by Arg333 and Lys351. Residue His363 is the Proton acceptor of the active site. UDP-N-acetyl-alpha-D-glucosamine-binding residues include Tyr366 and Asn377. Residues 386–387 (NY), Ser405, Ala423, and Arg440 each bind acetyl-CoA.

In the N-terminal section; belongs to the N-acetylglucosamine-1-phosphate uridyltransferase family. It in the C-terminal section; belongs to the transferase hexapeptide repeat family. Homotrimer. Mg(2+) serves as cofactor.

The protein localises to the cytoplasm. The catalysed reaction is alpha-D-glucosamine 1-phosphate + acetyl-CoA = N-acetyl-alpha-D-glucosamine 1-phosphate + CoA + H(+). The enzyme catalyses N-acetyl-alpha-D-glucosamine 1-phosphate + UTP + H(+) = UDP-N-acetyl-alpha-D-glucosamine + diphosphate. It functions in the pathway nucleotide-sugar biosynthesis; UDP-N-acetyl-alpha-D-glucosamine biosynthesis; N-acetyl-alpha-D-glucosamine 1-phosphate from alpha-D-glucosamine 6-phosphate (route II): step 2/2. The protein operates within nucleotide-sugar biosynthesis; UDP-N-acetyl-alpha-D-glucosamine biosynthesis; UDP-N-acetyl-alpha-D-glucosamine from N-acetyl-alpha-D-glucosamine 1-phosphate: step 1/1. Its pathway is bacterial outer membrane biogenesis; LPS lipid A biosynthesis. Its function is as follows. Catalyzes the last two sequential reactions in the de novo biosynthetic pathway for UDP-N-acetylglucosamine (UDP-GlcNAc). The C-terminal domain catalyzes the transfer of acetyl group from acetyl coenzyme A to glucosamine-1-phosphate (GlcN-1-P) to produce N-acetylglucosamine-1-phosphate (GlcNAc-1-P), which is converted into UDP-GlcNAc by the transfer of uridine 5-monophosphate (from uridine 5-triphosphate), a reaction catalyzed by the N-terminal domain. In Enterococcus faecalis (strain ATCC 700802 / V583), this protein is Bifunctional protein GlmU.